The primary structure comprises 315 residues: ADP/ATP translocase 4 (315 aa).

At 1–19 (MHREPPKKKAEKRLFDASS) the chain is on the mitochondrial intermembrane side. The stretch at 18-110 (SSFGKDLLAG…FAFKDKYKQL (93 aa)) is one Solcar 1 repeat. A helical transmembrane segment spans residues 20-49 (FGKDLLAGGVAAAVSKTAVAPIERVKLLLQ). The Mitochondrial matrix portion of the chain corresponds to 50–86 (VQASSKQISPEARYKGMVDCLVRIPREQGFFSFWRGN). The chain crosses the membrane as a helical span at residues 87 to 111 (LANVIRYFPTQALNFAFKDKYKQLF). 2 residues coordinate ADP: arginine 92 and lysine 104. The Mitochondrial intermembrane segment spans residues 112 to 121 (MSGVNKEKQF). A helical membrane pass occupies residues 122–142 (WRWFLANLASGGAAGATSLCV). Solcar repeat units follow at residues 123-213 (RWFL…VKGL) and 220-307 (TPFL…IKEF). The Mitochondrial matrix portion of the chain corresponds to 143-190 (VYPLDFARTRLGVDIGKGPEERQFKGLGDCIMKIAKSDGIAGLYQGFG). The chain crosses the membrane as a helical span at residues 191 to 211 (VSVQGIIVYRASYFGAYDTVK). The Mitochondrial intermembrane portion of the chain corresponds to 212-222 (GLLPKPKKTPF). Residues 223-243 (LVSFFIAQVVTTCSGILSYPF) form a helical membrane-spanning segment. At 244–283 (DTVRRRMMMQSGEAKRQYKGTLDCFVKIYQHEGINSFFRG) the chain is on the mitochondrial matrix side. Residue arginine 247 coordinates ADP. The interval 247–252 (RRRMMM) is important for transport activity. The short motif at 247–252 (RRRMMM) is the Nucleotide carrier signature motif element. A helical membrane pass occupies residues 284 to 301 (AFSNVLRGTGGALVLVLY). At 302–315 (DKIKEFFHIDIGGR) the chain is on the mitochondrial intermembrane side.

Belongs to the mitochondrial carrier (TC 2.A.29) family. In terms of assembly, monomer.

It is found in the mitochondrion inner membrane. It localises to the membrane. The protein resides in the cell projection. The protein localises to the cilium. Its subcellular location is the flagellum membrane. It catalyses the reaction ADP(in) + ATP(out) = ADP(out) + ATP(in). The catalysed reaction is dATP(out) + ADP(in) = dATP(in) + ADP(out). The enzyme catalyses dADP(in) + ADP(out) = dADP(out) + ADP(in). It carries out the reaction H(+)(in) = H(+)(out). The matrix-open state (m-state) is inhibited by the membrane-permeable bongkrekic acid (BKA). The cytoplasmic-open state (c-state) is inhibited by the membrane-impermeable toxic inhibitor carboxyatractyloside (CATR). Proton transporter activity is inhibited by ADP:ATP antiporter activity. Its function is as follows. ADP:ATP antiporter that mediates import of ADP into the mitochondrial matrix for ATP synthesis, and export of ATP out to fuel the cell. Cycles between the cytoplasmic-open state (c-state) and the matrix-open state (m-state): operates by the alternating access mechanism with a single substrate-binding site intermittently exposed to either the cytosolic (c-state) or matrix (m-state) side of the inner mitochondrial membrane. Specifically required during spermatogenesis, probably to mediate ADP:ATP exchange in spermatocytes. Large ATP supplies from mitochondria may be critical for normal progression of spermatogenesis during early stages of meiotic prophase I, including DNA double-strand break repair and chromosomal synapsis. In addition to its ADP:ATP antiporter activity, also involved in mitochondrial uncoupling and mitochondrial permeability transition pore (mPTP) activity. Plays a role in mitochondrial uncoupling by acting as a proton transporter: proton transport uncouples the proton flows via the electron transport chain and ATP synthase to reduce the efficiency of ATP production and cause mitochondrial thermogenesis. Proton transporter activity is inhibited by ADP:ATP antiporter activity, suggesting that SLC25A31/ANT4 acts as a master regulator of mitochondrial energy output by maintaining a delicate balance between ATP production (ADP:ATP antiporter activity) and thermogenesis (proton transporter activity). Proton transporter activity requires free fatty acids as cofactor, but does not transport it. Among nucleotides, may also exchange ADP for dATP and dADP. Also plays a key role in mPTP opening, a non-specific pore that enables free passage of the mitochondrial membranes to solutes of up to 1.5 kDa, and which contributes to cell death. It is however unclear if SLC25A31/ANT4 constitutes a pore-forming component of mPTP or regulates it. In Macaca fascicularis (Crab-eating macaque), this protein is ADP/ATP translocase 4.